We begin with the raw amino-acid sequence, 577 residues long: Chaperonin CPN60-1, mitochondrial (577 aa).

A mitochondrion-targeting transit peptide spans 1–34 (MYRAAASLASKARQAGNSLATRQVGSRLAWSRNY).

This sequence belongs to the chaperonin (HSP60) family.

It is found in the mitochondrion. Its function is as follows. Implicated in mitochondrial protein import and macromolecular assembly. May facilitate the correct folding of imported proteins. May also prevent misfolding and promote the refolding and proper assembly of unfolded polypeptides generated under stress conditions in the mitochondrial matrix. In Zea mays (Maize), this protein is Chaperonin CPN60-1, mitochondrial (CPN60I).